Reading from the N-terminus, the 739-residue chain is Catalase-peroxidase 1 (739 aa).

Residues 1 to 33 (MPEDRPIEDSPPIGEAQTDAPAGGCPAGFGRIK) form a disordered region. Positions 113 to 236 (WHAAGTYRVS…LAAVQMGLIY (124 aa)) form a cross-link, tryptophyl-tyrosyl-methioninium (Trp-Tyr) (with M-262). The Proton acceptor role is filled by His114. The tryptophyl-tyrosyl-methioninium (Tyr-Met) (with W-113) cross-link spans 236–262 (YVNPEGPNGNPDPQASAIDIRETFGRM). His277 is a binding site for heme b.

This sequence belongs to the peroxidase family. Peroxidase/catalase subfamily. Homodimer or homotetramer. Heme b serves as cofactor. Formation of the three residue Trp-Tyr-Met cross-link is important for the catalase, but not the peroxidase activity of the enzyme.

It catalyses the reaction H2O2 + AH2 = A + 2 H2O. The catalysed reaction is 2 H2O2 = O2 + 2 H2O. Functionally, bifunctional enzyme with both catalase and broad-spectrum peroxidase activity. May play a role in the intracellular survival of mycobacteria. The protein is Catalase-peroxidase 1 of Mycolicibacterium smegmatis (strain ATCC 700084 / mc(2)155) (Mycobacterium smegmatis).